A 611-amino-acid polypeptide reads, in one-letter code: Alpha-1,2-mannosyltransferase ALG9 (611 aa).

The segment covering 1-10 has biased composition (basic residues); that stretch reads MASRRARQRL. The tract at residues 1-51 is disordered; that stretch reads MASRRARQRLKGGGGGGGGGGDAGPAAEKLEQLGSREAGAEPRPESGNKAG. Residues 1-135 are Lumenal-facing; the sequence is MASRRARQRL…FHARILQTNK (135 aa). Over residues 11-23 the composition is skewed to gly residues; that stretch reads KGGGGGGGGGGDA. N-linked (GlcNAc...) asparagine glycosylation is present at asparagine 77. Residues 136–156 form a helical membrane-spanning segment; the sequence is ILVFYFLRCLLAFVSCVCELY. Over 157 to 171 the chain is Cytoplasmic; it reads FYKAVCKKFGLHVSR. A helical membrane pass occupies residues 172 to 192; that stretch reads MMLAFLVLSTGMFCSSSAFLP. Topologically, residues 193–213 are lumenal; the sequence is SSFCMYTTLIAMTGWYMDKTP. The helical transmembrane segment at 214–234 threads the bilayer; the sequence is IAVLGVAAGAILGWPFSAALG. The Cytoplasmic segment spans residues 235–249; it reads LPIAFDLLARKHRWK. A helical transmembrane segment spans residues 250 to 270; sequence SFLLWSLVALALFLVPVVVID. Residues 271–310 are Lumenal-facing; that stretch reads SYYYGKLVVAPLNIVLYNVFTSHGPDLYGTEPWYFYLING. Residues 311–331 form a helical membrane-spanning segment; the sequence is FLNFNVAFALALLVLPLTFLM. The Cytoplasmic segment spans residues 332 to 342; it reads EYLLQRFHVQN. Residues 343–363 traverse the membrane as a helical segment; sequence LGHPYWLTLAPMYIWFIIFFI. Over 364-370 the chain is Lumenal; sequence QPHKEER. The chain crosses the membrane as a helical span at residues 371-391; the sequence is FLFPVYPLICLCGAVALSALQ. Topologically, residues 392–405 are cytoplasmic; that stretch reads KCYHFVFQRYRLEH. The helical transmembrane segment at 406–426 threads the bilayer; sequence YTVTSNWLALGTVFLFGLLSF. Residues 427–611 are Lumenal-facing; sequence SRSVALFRGY…AKPSRKKSGG (185 aa). N-linked (GlcNAc...) asparagine glycans are attached at residues asparagine 550 and asparagine 593.

Belongs to the glycosyltransferase 22 family.

The protein localises to the endoplasmic reticulum membrane. It carries out the reaction an alpha-D-Man-(1-&gt;2)-alpha-D-Man-(1-&gt;2)-alpha-D-Man-(1-&gt;3)-[alpha-D-Man-(1-&gt;3)-alpha-D-Man-(1-&gt;6)]-beta-D-Man-(1-&gt;4)-beta-D-GlcNAc-(1-&gt;4)-alpha-D-GlcNAc-diphospho-di-trans,poly-cis-dolichol + a di-trans,poly-cis-dolichyl beta-D-mannosyl phosphate = an alpha-D-Man-(1-&gt;2)-alpha-D-Man-(1-&gt;2)-alpha-D-Man-(1-&gt;3)-[alpha-D-Man-(1-&gt;2)-alpha-D-Man-(1-&gt;3)-alpha-D-Man-(1-&gt;6)]-beta-D-Man-(1-&gt;4)-beta-D-GlcNAc-(1-&gt;4)-alpha-D-GlcNAc-diphospho-di-trans,poly-cis-dolichol + a di-trans,poly-cis-dolichyl phosphate + H(+). The enzyme catalyses an alpha-D-Man-(1-&gt;2)-alpha-D-Man-(1-&gt;2)-alpha-D-Man-(1-&gt;3)-[alpha-D-Man-(1-&gt;2)-alpha-D-Man-(1-&gt;3)-[alpha-D-Man-(1-&gt;6)]-alpha-D-Man-(1-&gt;6)]-beta-D-Man-(1-&gt;4)-beta-D-GlcNAc-(1-&gt;4)-alpha-D-GlcNAc-diphospho-di-trans,poly-cis-dolichol + a di-trans,poly-cis-dolichyl beta-D-mannosyl phosphate = an alpha-D-Man-(1-&gt;2)-alpha-D-Man-(1-&gt;2)-alpha-D-Man-(1-&gt;3)-[alpha-D-Man-(1-&gt;2)-alpha-D-Man-(1-&gt;3)-[alpha-D-Man-(1-&gt;2)-alpha-D-Man-(1-&gt;6)]-alpha-D-Man-(1-&gt;6)]-beta-D-Man-(1-&gt;4)-beta-D-GlcNAc-(1-&gt;4)-alpha-D-GlcNAc-diphospho-di-trans,poly-cis-dolichol + a di-trans,poly-cis-dolichyl phosphate + H(+). It functions in the pathway protein modification; protein glycosylation. In terms of biological role, mannosyltransferase that operates in the biosynthetic pathway of dolichol-linked oligosaccharides, the glycan precursors employed in protein asparagine (N)-glycosylation. The assembly of dolichol-linked oligosaccharides begins on the cytosolic side of the endoplasmic reticulum membrane and finishes in its lumen. The sequential addition of sugars to dolichol pyrophosphate produces dolichol-linked oligosaccharides containing fourteen sugars, including two GlcNAcs, nine mannoses and three glucoses. Once assembled, the oligosaccharide is transferred from the lipid to nascent proteins by oligosaccharyltransferases. In the lumen of the endoplasmic reticulum, catalyzes the addition of the seventh and ninth alpha-1,2-linked mannose residues to Man(6)GlcNAc(2)-PP-dolichol and Man(8)GlcNAc(2)-PP-dolichol respectively. The sequence is that of Alpha-1,2-mannosyltransferase ALG9 from Mus musculus (Mouse).